The following is a 599-amino-acid chain: ATP-dependent rRNA helicase SPB4 (599 aa).

Residues 7–35 carry the Q motif motif; it reads WDTLDYTLQPWIRTAVDAMGYETMTPVQA. The 187-residue stretch at 38–224 folds into the Helicase ATP-binding domain; that stretch reads IPLFARNKDV…KTGMRNPVKV (187 aa). 51-58 is an ATP binding site; the sequence is SVTGSGKT. The short motif at 172-175 is the DEAD box element; the sequence is DEAD. The 168-residue stretch at 248 to 415 folds into the Helicase C-terminal domain; that stretch reads KLQLLLTLLN…GLPEIIRAWI (168 aa). Residues 501-561 are a coiled coil; sequence QREKARKLAK…LKRKAIEEKL (61 aa). The interval 559-599 is disordered; that stretch reads EKLIENSDDSDNEVETDWKDIVRQRKKKKTNSGMQGDFGDL. Residues 564-573 are compositionally biased toward acidic residues; it reads NSDDSDNEVE.

It belongs to the DEAD box helicase family. DDX55/SPB4 subfamily. Component of pre-60S ribosomal complexes.

The protein resides in the nucleus. Its subcellular location is the nucleolus. The enzyme catalyses ATP + H2O = ADP + phosphate + H(+). ATP-binding RNA helicase involved in the biogenesis of 60S ribosomal subunits. Binds 90S pre-ribosomal particles and dissociates from pre-60S ribosomal particles after processing of 27SB pre-rRNA. Required for the normal formation of 18S rRNA through the processing of pre-rRNAs at sites A0, A1 and A2, and the normal formation of 25S and 5.8S rRNAs through the processing of pre-rRNAs at sites C1 and C2. The sequence is that of ATP-dependent rRNA helicase SPB4 from Eremothecium gossypii (strain ATCC 10895 / CBS 109.51 / FGSC 9923 / NRRL Y-1056) (Yeast).